Reading from the N-terminus, the 592-residue chain is Proline--tRNA ligase (592 aa).

Belongs to the class-II aminoacyl-tRNA synthetase family. ProS type 1 subfamily. In terms of assembly, homodimer.

It is found in the cytoplasm. It catalyses the reaction tRNA(Pro) + L-proline + ATP = L-prolyl-tRNA(Pro) + AMP + diphosphate. In terms of biological role, catalyzes the attachment of proline to tRNA(Pro) in a two-step reaction: proline is first activated by ATP to form Pro-AMP and then transferred to the acceptor end of tRNA(Pro). As ProRS can inadvertently accommodate and process non-cognate amino acids such as alanine and cysteine, to avoid such errors it has two additional distinct editing activities against alanine. One activity is designated as 'pretransfer' editing and involves the tRNA(Pro)-independent hydrolysis of activated Ala-AMP. The other activity is designated 'posttransfer' editing and involves deacylation of mischarged Ala-tRNA(Pro). The misacylated Cys-tRNA(Pro) is not edited by ProRS. The protein is Proline--tRNA ligase of Corynebacterium urealyticum (strain ATCC 43042 / DSM 7109).